A 1098-amino-acid chain; its full sequence is Mediator of RNA polymerase II transcription subunit 5 (1098 aa).

The tract at residues 1019 to 1041 is disordered; that stretch reads PDDVQKSADMKPDTGIKEDDSEK. Basic and acidic residues predominate over residues 1021–1041; that stretch reads DVQKSADMKPDTGIKEDDSEK.

This sequence belongs to the Mediator complex subunit 5 family. As to quaternary structure, component of the Mediator complex.

Its subcellular location is the nucleus. In terms of biological role, component of the Mediator complex, a coactivator involved in the regulated transcription of nearly all RNA polymerase II-dependent genes. Mediator functions as a bridge to convey information from gene-specific regulatory proteins to the basal RNA polymerase II transcription machinery. Mediator is recruited to promoters by direct interactions with regulatory proteins and serves as a scaffold for the assembly of a functional preinitiation complex with RNA polymerase II and the general transcription factors. This chain is Mediator of RNA polymerase II transcription subunit 5 (NUT1), found in Eremothecium gossypii (strain ATCC 10895 / CBS 109.51 / FGSC 9923 / NRRL Y-1056) (Yeast).